Reading from the N-terminus, the 1357-residue chain is DNA-directed RNA polymerase subunit beta (1357 aa).

This sequence belongs to the RNA polymerase beta chain family. As to quaternary structure, the RNAP catalytic core consists of 2 alpha, 1 beta, 1 beta' and 1 omega subunit. When a sigma factor is associated with the core the holoenzyme is formed, which can initiate transcription.

It carries out the reaction RNA(n) + a ribonucleoside 5'-triphosphate = RNA(n+1) + diphosphate. Its function is as follows. DNA-dependent RNA polymerase catalyzes the transcription of DNA into RNA using the four ribonucleoside triphosphates as substrates. The protein is DNA-directed RNA polymerase subunit beta of Pseudomonas syringae pv. tomato (strain ATCC BAA-871 / DC3000).